A 304-amino-acid polypeptide reads, in one-letter code: Hairy/enhancer-of-split related with YRPW motif protein 1 (304 aa).

The segment at M1–R52 is disordered. Positions E28–I47 are enriched in polar residues. Residues L48 to A117 form a transcriptional repression and interaction with NCOR1 and SIN3A region. A bHLH domain is found at A49–L104. The Orange domain occupies Y122–L158. The tract at residues L196–S234 is disordered. Positions G200–P210 are enriched in polar residues. A YRPW motif motif is present at residues Y294 to W297.

The protein belongs to the HEY family. As to quaternary structure, self-associates. Interacts with HES1 and HEYL. Interacts with HDAC1, NCOR1 and SIN3A. Interacts with GATA4 and GATA6. Interacts with CCDC89/BOIP. In terms of tissue distribution, expressed in the somitic mesoderm, the central nervous system, the kidney, the heart, nasal epithelium, and limbs.

Its subcellular location is the nucleus. In terms of biological role, transcriptional repressor which binds preferentially to the canonical E box sequence 5'-CACGTG-3'. Downstream effector of Notch signaling required for cardiovascular development. Specifically required for the Notch-induced endocardial epithelial to mesenchymal transition, which is itself criticial for cardiac valve and septum development. May be required in conjunction with HEY2 to specify arterial cell fate or identity. Promotes maintenance of neuronal precursor cells and glial versus neuronal fate specification. Represses transcription by the cardiac transcriptional activators GATA4 and GATA6 and by the neuronal bHLH factors ASCL1/MASH1 and NEUROD4/MATH3. Involved in the regulation of liver cancer cells self-renewal. This is Hairy/enhancer-of-split related with YRPW motif protein 1 (HEY1) from Homo sapiens (Human).